The following is a 132-amino-acid chain: Small ribosomal subunit protein uS8 (132 aa).

Belongs to the universal ribosomal protein uS8 family. As to quaternary structure, part of the 30S ribosomal subunit. Contacts proteins S5 and S12.

One of the primary rRNA binding proteins, it binds directly to 16S rRNA central domain where it helps coordinate assembly of the platform of the 30S subunit. The chain is Small ribosomal subunit protein uS8 from Leuconostoc mesenteroides subsp. mesenteroides (strain ATCC 8293 / DSM 20343 / BCRC 11652 / CCM 1803 / JCM 6124 / NCDO 523 / NBRC 100496 / NCIMB 8023 / NCTC 12954 / NRRL B-1118 / 37Y).